A 1185-amino-acid chain; its full sequence is Syntaxin-binding protein 5-like (1185 aa).

Residue methionine 1 is modified to N-acetylmethionine. Residues 15–44 (ASSPGSGSSSGSNSGGAGSGSVHPGGTAGL) are disordered. A compositionally biased stretch (low complexity) spans 16 to 26 (SSPGSGSSSGS). 10 WD repeats span residues 73–106 (TALAFDPVQKILAIGTRTGAIRILGRPGVDCYCQ), 113–152 (VLQLQFLINEGALVSASSDDTLHLWNLRQKRPAILHSLKF), 157–193 (ITYCHLPFQSKWLYVGTERGNTHIVNIESFILSGYVI), 212–246 (HLSDSPRDEGKLLIGYENGTVVFWDLKSKRAELRV), 252–284 (IHSIDWHHEGKQFMCSHSDGSLTLWNLKSPSRP), 306–348 (PILK…KAIT), 356–390 (IVEFLTLCETPYPNEFQEPYAVAVLLEKDLIVVDL), 412–489 (TCTA…YKLK), 517–628 (QMIY…DLVI), and 642–704 (TSLS…IADN). Threonine 567 is modified (phosphothreonine). Positions 567 to 601 (TPEPETSPPFPDLSSQLPPSRSLSGSTNTVSSEGV) are disordered. Phosphoserine occurs at positions 573, 588, and 592. Low complexity predominate over residues 578 to 592 (DLSSQLPPSRSLSGS). Residue threonine 595 is modified to Phosphothreonine. Serine 598 bears the Phosphoserine mark. Position 708 is an omega-N-methylarginine (arginine 708). A compositionally biased stretch (polar residues) spans 747–768 (TSDHVNGHCTSPTSQSCSSGKR). Positions 747–770 (TSDHVNGHCTSPTSQSCSSGKRLS) are disordered. A phosphoserine mark is found at serine 762, serine 764, serine 765, serine 770, serine 771, serine 792, serine 799, serine 811, serine 819, serine 821, and serine 822. 4 WD repeats span residues 831 to 888 (ITAL…SGTF), 897 to 968 (TFSC…QTCL), 973 to 1017 (ITET…LDVN), and 1031 to 1054 (CFTNEGQALYLVSPTEIQRLTYSQ). A Phosphothreonine modification is found at threonine 1092. A v-SNARE coiled-coil homology domain is found at 1120–1180 (SIEGMKGAAG…HELMLKYKDK (61 aa)).

This sequence belongs to the WD repeat L(2)GL family. As to quaternary structure, interacts with STX1A and STX4. Phosphorylated, leading to STXBP5L increased turnover and subsequent de-repression of insulin secretion. Phosphorylated on serine residues in response to glucose or phorbol esters. In terms of processing, ubiquitinated by the E3 ligase SYVN1, leading to STXBP5L proteasomal degradation. Detected in hippocampus and cerebellum. Expressed in pancreatic beta-cells where it modulates insulin secretion.

The protein resides in the cytoplasm. The protein localises to the cell membrane. Its subcellular location is the membrane. Plays a role in vesicle trafficking and exocytosis inhibition. In pancreatic beta-cells, inhibits insulin secretion probably by interacting with and regulating STX1A and STX4, key t-SNARE proteins involved in the fusion of insulin granules to the plasma membrane. Also plays a role in neurotransmitter release by inhibiting basal acetylcholine release from axon terminals and by preventing synaptic fatigue upon repetitive stimulation. Promotes as well axonal outgrowth. The protein is Syntaxin-binding protein 5-like (Stxbp5l) of Mus musculus (Mouse).